The primary structure comprises 346 residues: Threonylcarbamoyl-AMP synthase (346 aa).

Residues 18-205 (DPQIAQAAAL…IPVLLRPGGI (188 aa)) enclose the YrdC-like domain. Threonine 40 contributes to the L-threonine binding site. Residues arginine 63 and asparagine 67 each contribute to the ATP site. Histidine 72 is an L-threonine binding site. An ATP-binding site is contributed by threonine 123. Arginine 127 and alanine 147 together coordinate L-threonine. ATP contacts are provided by serine 149 and serine 157. Serine 187 provides a ligand contact to L-threonine. Residues arginine 201 and tyrosine 240 each contribute to the ATP site.

This sequence belongs to the SUA5 family.

Its subcellular location is the cytoplasm. It catalyses the reaction L-threonine + hydrogencarbonate + ATP = L-threonylcarbamoyladenylate + diphosphate + H2O. Required for the formation of a threonylcarbamoyl group on adenosine at position 37 (t(6)A37) in tRNAs that read codons beginning with adenine. Catalyzes the conversion of L-threonine, HCO(3)(-)/CO(2) and ATP to give threonylcarbamoyl-AMP (TC-AMP) as the acyladenylate intermediate, with the release of diphosphate. Is also able to catalyze the reverse reaction in vitro, i.e. the formation of ATP from TC-AMP and PPi. In Bacillus subtilis (strain 168), this protein is Threonylcarbamoyl-AMP synthase (ywlC).